We begin with the raw amino-acid sequence, 59 residues long: UPF0434 protein Shew_1640 (59 aa).

The protein belongs to the UPF0434 family.

The polypeptide is UPF0434 protein Shew_1640 (Shewanella loihica (strain ATCC BAA-1088 / PV-4)).